The chain runs to 159 residues: uncharacterized protein (159 aa).

The N-acetyltransferase domain occupies 7 to 151; it reads LLINYKTLEE…NPLVWHPASE (145 aa).

This is an uncharacterized protein from Bacillus licheniformis (strain ATCC 14580 / DSM 13 / JCM 2505 / CCUG 7422 / NBRC 12200 / NCIMB 9375 / NCTC 10341 / NRRL NRS-1264 / Gibson 46).